We begin with the raw amino-acid sequence, 175 residues long: Transcriptional repressor NrdR (175 aa).

The segment at 3 to 34 is a zinc-finger region; sequence CPICQDTNSRVLESRSAESGKSIRRRRECMNC. An ATP-cone domain is found at 49–139; sequence ITIIKRDGKK…VYRKFQGIRD (91 aa).

Belongs to the NrdR family. Requires Zn(2+) as cofactor.

Its function is as follows. Negatively regulates transcription of bacterial ribonucleotide reductase nrd genes and operons by binding to NrdR-boxes. In Trichodesmium erythraeum (strain IMS101), this protein is Transcriptional repressor NrdR.